Consider the following 835-residue polypeptide: Involucrin (835 aa).

The span at Met1 to Leu15 shows a compositional bias: polar residues. 8 disordered regions span residues Met1–Arg133, Glu150–Pro206, Gly221–His285, Gly321–Gln342, Gly381–Glu428, Leu446–Pro486, Gly501–Glu548, and Leu566–Leu809. The span at Glu76–His91 shows a compositional bias: low complexity. Composition is skewed to basic and acidic residues over residues Trp92–Arg115 and Gln159–Gln168. Over residues Gln169–Gly181 the composition is skewed to low complexity. Composition is skewed to basic and acidic residues over residues Gln182–Gln198 and Gln222–Gln268. 3 stretches are compositionally biased toward low complexity: residues Gln269–Gly281, Gln329–Gly341, and Gln389–Gly401. Basic and acidic residues-rich tracts occupy residues Gln402–Gly421 and Leu446–Glu464. The segment covering Gln509–Gly521 has biased composition (low complexity). 3 stretches are compositionally biased toward basic and acidic residues: residues Gln522 to Gly541, Leu566 to Glu584, and Lys594 to Glu620. Positions His655–Gly668 are enriched in low complexity. Residues Gln669–Glu685 are compositionally biased toward basic and acidic residues. Residues Leu693–Pro710 are compositionally biased toward low complexity. Basic and acidic residues-rich tracts occupy residues Lys711 to Glu721, Gln729 to Ala738, and Lys751 to Gln775. Polar residues predominate over residues Gln776 to Gln789.

Belongs to the involucrin family. Directly or indirectly cross-linked to cornifelin (CNFN). Substrate of transglutaminase. Specific glutamines or lysines are cross-linked to keratins, desmoplakin and to inter involucrin molecules. In terms of tissue distribution, keratinocytes of epidermis and other stratified squamous epithelia.

The protein localises to the cytoplasm. In terms of biological role, part of the insoluble cornified cell envelope (CE) of stratified squamous epithelia. The polypeptide is Involucrin (IVL) (Pongo pygmaeus (Bornean orangutan)).